The sequence spans 250 residues: 3-deoxy-manno-octulosonate cytidylyltransferase 1 (250 aa).

This sequence belongs to the KdsB family.

Its subcellular location is the cytoplasm. It carries out the reaction 3-deoxy-alpha-D-manno-oct-2-ulosonate + CTP = CMP-3-deoxy-beta-D-manno-octulosonate + diphosphate. It functions in the pathway nucleotide-sugar biosynthesis; CMP-3-deoxy-D-manno-octulosonate biosynthesis; CMP-3-deoxy-D-manno-octulosonate from 3-deoxy-D-manno-octulosonate and CTP: step 1/1. Its pathway is bacterial outer membrane biogenesis; lipopolysaccharide biosynthesis. In terms of biological role, activates KDO (a required 8-carbon sugar) for incorporation into bacterial lipopolysaccharide in Gram-negative bacteria. The polypeptide is 3-deoxy-manno-octulosonate cytidylyltransferase 1 (Actinobacillus pleuropneumoniae serotype 5b (strain L20)).